Consider the following 378-residue polypeptide: Cytochrome b (378 aa).

A run of 4 helical transmembrane segments spans residues 34–54, 78–99, 114–134, and 179–199; these read FGSLLGLCLMLQILTGLFLAM, WFLRICHANGASFFFACLFMHV, WNTGVIILFLTMATGFLGYVL, and FFTFHFIFPFIILALMMIHLL. 2 residues coordinate heme b: histidine 84 and histidine 98. Heme b is bound by residues histidine 183 and histidine 197. Histidine 202 is a binding site for a ubiquinone. The next 4 helical transmembrane spans lie at 227–247, 289–309, 321–341, and 348–368; these read YKDIFGFIVFYWILIRFIWKF, LGGVIALVLSIAILLILPFTH, LNQILFWNMVVVASLLTWIGA, and YVLTGQILTVLYFSYFIINPL.

It belongs to the cytochrome b family. In terms of assembly, the main subunits of complex b-c1 are: cytochrome b, cytochrome c1 and the Rieske protein. Heme b serves as cofactor.

It localises to the mitochondrion inner membrane. Component of the ubiquinol-cytochrome c reductase complex (complex III or cytochrome b-c1 complex) that is part of the mitochondrial respiratory chain. The b-c1 complex mediates electron transfer from ubiquinol to cytochrome c. Contributes to the generation of a proton gradient across the mitochondrial membrane that is then used for ATP synthesis. This Anopheles quadrimaculatus (Common malaria mosquito) protein is Cytochrome b (MT-CYB).